Consider the following 288-residue polypeptide: Sulfur carrier protein FdhD (288 aa).

The tract at residues 1–23 (MMRCMQSPEVHPAAAGDAEPPTH) is disordered. The active-site Cysteine persulfide intermediate is Cys127.

This sequence belongs to the FdhD family.

It is found in the cytoplasm. Its function is as follows. Required for formate dehydrogenase (FDH) activity. Acts as a sulfur carrier protein that transfers sulfur from IscS to the molybdenum cofactor prior to its insertion into FDH. The chain is Sulfur carrier protein FdhD from Cupriavidus necator (strain ATCC 17699 / DSM 428 / KCTC 22496 / NCIMB 10442 / H16 / Stanier 337) (Ralstonia eutropha).